Reading from the N-terminus, the 144-residue chain is Nucleoside diphosphate kinase (144 aa).

Positions 11, 59, 87, 93, 104, and 114 each coordinate ATP. His117 acts as the Pros-phosphohistidine intermediate in catalysis.

This sequence belongs to the NDK family. In terms of assembly, homotetramer. Mg(2+) serves as cofactor.

The protein resides in the cytoplasm. The enzyme catalyses a 2'-deoxyribonucleoside 5'-diphosphate + ATP = a 2'-deoxyribonucleoside 5'-triphosphate + ADP. It carries out the reaction a ribonucleoside 5'-diphosphate + ATP = a ribonucleoside 5'-triphosphate + ADP. Major role in the synthesis of nucleoside triphosphates other than ATP. The ATP gamma phosphate is transferred to the NDP beta phosphate via a ping-pong mechanism, using a phosphorylated active-site intermediate. This chain is Nucleoside diphosphate kinase, found in Psychromonas ingrahamii (strain DSM 17664 / CCUG 51855 / 37).